Consider the following 357-residue polypeptide: AA9 family lytic polysaccharide monooxygenase B (357 aa).

Positions 1–18 (MKFSSVLALAASAKLVAS) are cleaved as a signal peptide. Residues His19 and His101 each contribute to the Cu(2+) site. The catalytic stretch occupies residues 19–234 (HATVFAVWIN…IPGPAVWDGA (216 aa)). Cys61 and Cys182 form a disulfide bridge. Residues His168 and Gln177 each coordinate O2. Tyr179 serves as a coordination point for Cu(2+). Residues 235-318 (SSGSGSSGSG…SAAPTGGTGT (84 aa)) form a ser/Thr-rich linker region. Positions 292–317 (SVRPTTSAAPTTSAPTSSAAPTGGTG) are disordered. Positions 295–313 (PTTSAAPTTSAPTSSAAPT) are enriched in low complexity. The CBM1 domain occupies 319 to 355 (GSIQIYQQCGGMNYKGATGCASGLTCKQWNPYYHQCV).

Belongs to the polysaccharide monooxygenase AA9 family. The cofactor is Cu(2+).

Its subcellular location is the secreted. It catalyses the reaction [(1-&gt;4)-beta-D-glucosyl]n+m + reduced acceptor + O2 = 4-dehydro-beta-D-glucosyl-[(1-&gt;4)-beta-D-glucosyl]n-1 + [(1-&gt;4)-beta-D-glucosyl]m + acceptor + H2O.. Functionally, lytic polysaccharide monooxygenase (LPMO) that depolymerizes crystalline and amorphous polysaccharides via the oxidation of scissile alpha- or beta-(1-4)-glycosidic bonds, yielding C4 oxidation products. Catalysis by LPMOs requires the reduction of the active-site copper from Cu(II) to Cu(I) by a reducing agent and H(2)O(2) or O(2) as a cosubstrate. Active on carboxymethylcellulose (CMC), hydroxyethylcellulose (HEC) and beta-glucan. Also active on soluble cellohexaose, a property that is restricted to only a few characterized LPMOs. This is AA9 family lytic polysaccharide monooxygenase B from Emericella nidulans (strain FGSC A4 / ATCC 38163 / CBS 112.46 / NRRL 194 / M139) (Aspergillus nidulans).